Reading from the N-terminus, the 65-residue chain is MTTKLLFVCLGNICRSPAAEGVFLHLIEQRQLTDQFLVDSAGTGGWHVGNPADRRMQAAARRRGI.

The active-site Nucleophile is cysteine 9. Arginine 15 is an active-site residue.

It belongs to the low molecular weight phosphotyrosine protein phosphatase family.

This is an uncharacterized protein from Synechococcus sp. (strain WH8020).